A 158-amino-acid polypeptide reads, in one-letter code: Molybdopterin synthase catalytic subunit (158 aa).

Residues 107–108 (HR), Lys-123, and 130–132 (KKE) contribute to the substrate site.

It belongs to the MoaE family. MOCS2B subfamily. As to quaternary structure, heterotetramer; composed of 2 small (mocs2s) and 2 large (mocs2l) subunits.

It is found in the cytoplasm. It carries out the reaction 2 [molybdopterin-synthase sulfur-carrier protein]-C-terminal-Gly-aminoethanethioate + cyclic pyranopterin phosphate + H2O = molybdopterin + 2 [molybdopterin-synthase sulfur-carrier protein]-C-terminal Gly-Gly + 2 H(+). It participates in cofactor biosynthesis; molybdopterin biosynthesis. Its function is as follows. Catalytic subunit of the molybdopterin synthase complex, a complex that catalyzes the conversion of precursor Z into molybdopterin. Acts by mediating the incorporation of 2 sulfur atoms from thiocarboxylated mocs2s into precursor Z to generate a dithiolene group. The protein is Molybdopterin synthase catalytic subunit (mocs2l) of Dictyostelium discoideum (Social amoeba).